A 708-amino-acid chain; its full sequence is Fatty acid oxidation complex subunit alpha (708 aa).

An enoyl-CoA hydratase region spans residues M1–P190. Positions D310–Q708 are 3-hydroxyacyl-CoA dehydrogenase.

This sequence in the N-terminal section; belongs to the enoyl-CoA hydratase/isomerase family. The protein in the central section; belongs to the 3-hydroxyacyl-CoA dehydrogenase family. As to quaternary structure, heterotetramer of two alpha chains (FadJ) and two beta chains (FadI).

Its subcellular location is the cytoplasm. The enzyme catalyses a (3S)-3-hydroxyacyl-CoA = a (2E)-enoyl-CoA + H2O. The catalysed reaction is a 4-saturated-(3S)-3-hydroxyacyl-CoA = a (3E)-enoyl-CoA + H2O. It catalyses the reaction a (3S)-3-hydroxyacyl-CoA + NAD(+) = a 3-oxoacyl-CoA + NADH + H(+). It carries out the reaction (3S)-3-hydroxybutanoyl-CoA = (3R)-3-hydroxybutanoyl-CoA. It functions in the pathway lipid metabolism; fatty acid beta-oxidation. In terms of biological role, catalyzes the formation of a hydroxyacyl-CoA by addition of water on enoyl-CoA. Also exhibits 3-hydroxyacyl-CoA epimerase and 3-hydroxyacyl-CoA dehydrogenase activities. The polypeptide is Fatty acid oxidation complex subunit alpha (Idiomarina loihiensis (strain ATCC BAA-735 / DSM 15497 / L2-TR)).